Reading from the N-terminus, the 395-residue chain is Choline/ethanolamine kinase (395 aa).

An N-acetylalanine modification is found at Ala-2. Residues Ser-75–Leu-81, Arg-104, Gln-146–Pro-152, Gln-244, and Asp-264 contribute to the ATP site. Gly-77–Ser-79 contacts phosphocholine.

This sequence belongs to the choline/ethanolamine kinase family. In terms of assembly, homodimer, and heterodimer with CHKA.

The enzyme catalyses choline + ATP = phosphocholine + ADP + H(+). The catalysed reaction is ethanolamine + ATP = phosphoethanolamine + ADP + H(+). Its pathway is phospholipid metabolism; phosphatidylethanolamine biosynthesis; phosphatidylethanolamine from ethanolamine: step 1/3. Has a key role in phospholipid metabolism, and catalyzes the first step of phosphatidylethanolamine and phosphatidylcholine biosynthesis. This is Choline/ethanolamine kinase (CHKB) from Homo sapiens (Human).